We begin with the raw amino-acid sequence, 421 residues long: ATP-dependent RNA helicase RhlB (421 aa).

Residues 9–37 (QKFSDFALHAKVIEALENKGFHYCTPIQA) carry the Q motif motif. In terms of domain architecture, Helicase ATP-binding spans 40–219 (LPLTLAGRDV…FEQMNNAEYV (180 aa)). 53–60 (AQTGTGKT) contacts ATP. Residues 165–168 (DEAD) carry the DEAD box motif. Positions 245-390 (RLLQTLIEEE…QSKYNPDALL (146 aa)) constitute a Helicase C-terminal domain. The interval 386–421 (PDALLSELPPPKRLTRARSGNGPRRTGAPRNRRRPG) is disordered. Over residues 405 to 414 (GNGPRRTGAP) the composition is skewed to low complexity.

This sequence belongs to the DEAD box helicase family. RhlB subfamily. Component of the RNA degradosome, which is a multiprotein complex involved in RNA processing and mRNA degradation.

The protein localises to the cytoplasm. The catalysed reaction is ATP + H2O = ADP + phosphate + H(+). In terms of biological role, DEAD-box RNA helicase involved in RNA degradation. Has RNA-dependent ATPase activity and unwinds double-stranded RNA. The sequence is that of ATP-dependent RNA helicase RhlB from Enterobacter sp. (strain 638).